Here is a 151-residue protein sequence, read N- to C-terminus: Cytochrome c-type biogenesis protein CcmE (151 aa).

The Cytoplasmic portion of the chain corresponds to 1-9 (MKGLKKKRR). A helical; Signal-anchor for type II membrane protein transmembrane segment spans residues 10-30 (IQIIALAFVALAGSTALIGYA). Over 31–151 (MRDGINFFRS…FQHTEDQPQG (121 aa)) the chain is Periplasmic. Residues H123 and Y127 each contribute to the heme site.

It belongs to the CcmE/CycJ family.

Its subcellular location is the cell inner membrane. Heme chaperone required for the biogenesis of c-type cytochromes. Transiently binds heme delivered by CcmC and transfers the heme to apo-cytochromes in a process facilitated by CcmF and CcmH. This Cereibacter sphaeroides (strain ATCC 17029 / ATH 2.4.9) (Rhodobacter sphaeroides) protein is Cytochrome c-type biogenesis protein CcmE.